The chain runs to 199 residues: Probable nicotinate-nucleotide adenylyltransferase (199 aa).

The protein belongs to the NadD family.

The catalysed reaction is nicotinate beta-D-ribonucleotide + ATP + H(+) = deamido-NAD(+) + diphosphate. The protein operates within cofactor biosynthesis; NAD(+) biosynthesis; deamido-NAD(+) from nicotinate D-ribonucleotide: step 1/1. Catalyzes the reversible adenylation of nicotinate mononucleotide (NaMN) to nicotinic acid adenine dinucleotide (NaAD). This chain is Probable nicotinate-nucleotide adenylyltransferase, found in Roseiflexus sp. (strain RS-1).